Consider the following 238-residue polypeptide: Probable 2-phosphosulfolactate phosphatase (238 aa).

The protein belongs to the ComB family. It depends on Mg(2+) as a cofactor.

The enzyme catalyses (2R)-O-phospho-3-sulfolactate + H2O = (2R)-3-sulfolactate + phosphate. The protein is Probable 2-phosphosulfolactate phosphatase of Clostridium beijerinckii (strain ATCC 51743 / NCIMB 8052) (Clostridium acetobutylicum).